The following is a 206-amino-acid chain: MLSAQLEAYLAEINLPATAEQKKQLLDFVGMLNKWNKAYNLTSVRDPEAMLVRHIMDSLVVSPHLQGERFIDVGTGPGLPGIPLAIMNPDKTFVLLDSLGKRIRFQKQVAFELGIHNISSIESRVEAYQPEQKFDGVLSRAFASIHDMLTWCHHLPAEHGQFYALKGLLSDEEMQQIPAGFVVTETIELQVPRLDEQRHLLKIIKE.

S-adenosyl-L-methionine is bound by residues glycine 74, leucine 79, 125–126 (VE), and arginine 140.

This sequence belongs to the methyltransferase superfamily. RNA methyltransferase RsmG family.

The protein localises to the cytoplasm. The enzyme catalyses guanosine(527) in 16S rRNA + S-adenosyl-L-methionine = N(7)-methylguanosine(527) in 16S rRNA + S-adenosyl-L-homocysteine. Functionally, specifically methylates the N7 position of guanine in position 527 of 16S rRNA. The sequence is that of Ribosomal RNA small subunit methyltransferase G from Shewanella sp. (strain ANA-3).